Here is a 149-residue protein sequence, read N- to C-terminus: 6,7-dimethyl-8-ribityllumazine synthase (149 aa).

Residues F22, A56–E58, and A80–I82 each bind 5-amino-6-(D-ribitylamino)uracil. E85–T86 lines the (2S)-2-hydroxy-3-oxobutyl phosphate pocket. H88 acts as the Proton donor in catalysis. N113 provides a ligand contact to 5-amino-6-(D-ribitylamino)uracil. R127 is a binding site for (2S)-2-hydroxy-3-oxobutyl phosphate.

Belongs to the DMRL synthase family.

It carries out the reaction (2S)-2-hydroxy-3-oxobutyl phosphate + 5-amino-6-(D-ribitylamino)uracil = 6,7-dimethyl-8-(1-D-ribityl)lumazine + phosphate + 2 H2O + H(+). It participates in cofactor biosynthesis; riboflavin biosynthesis; riboflavin from 2-hydroxy-3-oxobutyl phosphate and 5-amino-6-(D-ribitylamino)uracil: step 1/2. Catalyzes the formation of 6,7-dimethyl-8-ribityllumazine by condensation of 5-amino-6-(D-ribitylamino)uracil with 3,4-dihydroxy-2-butanone 4-phosphate. This is the penultimate step in the biosynthesis of riboflavin. The polypeptide is 6,7-dimethyl-8-ribityllumazine synthase (Methylobacillus flagellatus (strain ATCC 51484 / DSM 6875 / VKM B-1610 / KT)).